The primary structure comprises 462 residues: Bindin (462 aa).

Positions 1–19 are cleaved as a signal peptide; it reads MARQLSVILVALTLTTALA. Positions 20 to 244 are excised as a propeptide; that stretch reads ENFPTRTSAP…DSGRSARKKR (225 aa). Disordered regions lie at residues 155-194 and 221-278; these read DDRR…APKD and RTRR…QGMG. The interval 372-380 is fucose-binding domain; it reads LRHLRHHSN.

Belongs to the bindin family.

It is found in the cytoplasmic vesicle. The protein localises to the secretory vesicle. The protein resides in the acrosome lumen. Functionally, species-specific sea urchin sperm protein required for adhesion of sperm to the egg surface during fertilization. Bindin coats the acrosomal process after it is externalized by the acrosome reaction. It binds to sulfated, fucose-containing polysaccharides on the vitelline layer receptor proteoglycans which cover the egg plasma membrane. This is Bindin from Lytechinus variegatus (Green sea urchin).